Reading from the N-terminus, the 315-residue chain is MIKLGIVMDPIAHINIKKDTSFAMLLEAQRRGYELHYMEMADLYLINGEARACTRTLSVEQNYDKWYEFGSEQEIKLADLDVILMRKDPPFDTEFIYATYILERAEEEGTLIVNKPQSLRDCNEKLYTAWFADLTPETLVTRNKAQLKAFWEKHGDIIMKPLDGMGGASIFRVKEGDPNIGVIAETLTELGNRYCMAQNYLPAIKDGDKRVLVVDGEPVPYCLARIPQGGETRGNLAAGGRGEPRPLSESDWEIARRVGPTLKAKGLIFVGLDIIGDRLTEINVTSPTCVREIEAEYPISITGMLMDAIEARLAK.

Residues 125-310 (KLYTAWFADL…ITGMLMDAIE (186 aa)) enclose the ATP-grasp domain. 151-207 (WEKHGDIIMKPLDGMGGASIFRVKEGDPNIGVIAETLTELGNRYCMAQNYLPAIKDG) contributes to the ATP binding site. Glu-281 and Asn-283 together coordinate Mg(2+).

The protein belongs to the prokaryotic GSH synthase family. Mg(2+) serves as cofactor. Mn(2+) is required as a cofactor.

The catalysed reaction is gamma-L-glutamyl-L-cysteine + glycine + ATP = glutathione + ADP + phosphate + H(+). Its pathway is sulfur metabolism; glutathione biosynthesis; glutathione from L-cysteine and L-glutamate: step 2/2. The sequence is that of Glutathione synthetase from Salmonella typhi.